Consider the following 528-residue polypeptide: UDP-glucuronosyltransferase 2B19 (528 aa).

The first 21 residues, Met-1 to Gly-21, serve as a signal peptide directing secretion. The residue at position 135 (Lys-135) is an N6-succinyllysine. A glycan (N-linked (GlcNAc...) asparagine) is linked at Asn-315. The chain crosses the membrane as a helical span at residues Val-493–Phe-513.

It belongs to the UDP-glycosyltransferase family. In terms of tissue distribution, expressed in liver, ovary, prostate, colon, kidney, pancreas, brain, cerebellum, mammary gland and epididymis. Not expressed in small intestine, spleen, bladder, adrenal gland and testis.

The protein resides in the microsome membrane. It is found in the endoplasmic reticulum membrane. The catalysed reaction is glucuronate acceptor + UDP-alpha-D-glucuronate = acceptor beta-D-glucuronoside + UDP + H(+). Its function is as follows. UDPGT is of major importance in the conjugation and subsequent elimination of potentially toxic xenobiotics and endogenous compounds. This isozyme displays activity toward several classes of xenobiotic substrates: eugenol, 4-methyllumbelliferone, p-nitrophenol, 1-naphthol, p,p'-biphenol, naringenin and o,o'-biphenol. Active also on 3a-hydroxy and 17b-hydroxy positions of steroids. Contributes to the formation of androgen glucuronide in extrahepatic steroid target tissues such as the prostate. This Macaca fascicularis (Crab-eating macaque) protein is UDP-glucuronosyltransferase 2B19 (UGT2B19).